Reading from the N-terminus, the 384-residue chain is Putative dioxygenase SSO1533 (384 aa).

Fe cation contacts are provided by H296, E302, and H332.

The protein belongs to the homogentisate dioxygenase family. It depends on Fe cation as a cofactor.

In Saccharolobus solfataricus (strain ATCC 35092 / DSM 1617 / JCM 11322 / P2) (Sulfolobus solfataricus), this protein is Putative dioxygenase SSO1533.